The chain runs to 443 residues: Serine/threonine-protein phosphatase 2A 55 kDa regulatory subunit B beta isoform (443 aa).

7 WD repeats span residues 22 to 61, 87 to 128, 171 to 209, 220 to 260, 279 to 317, 334 to 375, and 410 to 443; these read TEADIISTVEFNPTGELLATGDKGGRVVVFQREQESKSQP, EIEE…KRPE, AHTYHINSISVNSDYETYMSTDDLRINLWNLEITNRSFN, ELTE…LCDN, EIISSISDVKFSHSGRYLMTRDYLTVKVWDINMESKPLE, ENDC…DVTL, and DFSKKILHTAWHPNENIIAVAATNNLYIFQDKVN.

It belongs to the phosphatase 2A regulatory subunit B family. As to quaternary structure, PP2A consists of a common heterodimeric core enzyme, composed of a 36 kDa catalytic subunit (subunit C) and a 65 kDa constant regulatory subunit (PR65 or subunit A), that associates with a variety of regulatory subunits.

The protein resides in the cytoplasm. Its subcellular location is the cytoskeleton. It localises to the membrane. The B regulatory subunit might modulate substrate selectivity and catalytic activity, and might also direct the localization of the catalytic enzyme to a particular subcellular compartment. In Carassius auratus (Goldfish), this protein is Serine/threonine-protein phosphatase 2A 55 kDa regulatory subunit B beta isoform (ppp2r2b).